A 191-amino-acid polypeptide reads, in one-letter code: Protein Ves (191 aa).

This sequence belongs to the Ves family.

This Escherichia coli (strain SMS-3-5 / SECEC) protein is Protein Ves.